Reading from the N-terminus, the 514-residue chain is Na(+)/H(+) antiporter NhaB (514 aa).

Transmembrane regions (helical) follow at residues 23-43 (LALLVFLIINPFIFLANPFIA), 63-83 (PLLPGGLLAIEAVIIGMTSAA), 97-117 (LLLMFMVAGIYFMKQLLLFIF), 120-140 (LLLSIRSKMVLSLAFCVAAAF), 144-164 (FLDALTVVAVVISVAVGFYGI), 202-222 (LMMHAGVGTALGGVMTMVGEP), 238-258 (FFLRMSPVTVPVLVCGLLTCM), 303-323 (AVIGVWLVTALALHLAEVGLI), 357-377 (LTVFFSIVAVIIDQHLFAPII), 391-411 (LFYLFNGLLSSISDNVFVGTI), 447-467 (ATPNGQAAFLFLLTSALAPLI), and 475-495 (VWMALPYTIVLTLIGLLCVEF).

Belongs to the NhaB Na(+)/H(+) (TC 2.A.34) antiporter family.

The protein localises to the cell inner membrane. It catalyses the reaction 2 Na(+)(in) + 3 H(+)(out) = 2 Na(+)(out) + 3 H(+)(in). Its function is as follows. Na(+)/H(+) antiporter that extrudes sodium in exchange for external protons. This Salmonella newport (strain SL254) protein is Na(+)/H(+) antiporter NhaB.